The following is a 223-amino-acid chain: Crossover junction endodeoxyribonuclease RuvC (223 aa).

Residues D12, E73, and D146 contribute to the active site. 3 residues coordinate Mg(2+): D12, E73, and D146. The interval 182–223 (QGKLGKAKSTLNARNNAQVTGDAQVRAGHPSQFERPDRADPR) is disordered. Residues 190–202 (STLNARNNAQVTG) are compositionally biased toward polar residues. A compositionally biased stretch (basic and acidic residues) spans 213 to 223 (QFERPDRADPR).

It belongs to the RuvC family. Homodimer which binds Holliday junction (HJ) DNA. The HJ becomes 2-fold symmetrical on binding to RuvC with unstacked arms; it has a different conformation from HJ DNA in complex with RuvA. In the full resolvosome a probable DNA-RuvA(4)-RuvB(12)-RuvC(2) complex forms which resolves the HJ. The cofactor is Mg(2+).

It is found in the cytoplasm. It carries out the reaction Endonucleolytic cleavage at a junction such as a reciprocal single-stranded crossover between two homologous DNA duplexes (Holliday junction).. Its function is as follows. The RuvA-RuvB-RuvC complex processes Holliday junction (HJ) DNA during genetic recombination and DNA repair. Endonuclease that resolves HJ intermediates. Cleaves cruciform DNA by making single-stranded nicks across the HJ at symmetrical positions within the homologous arms, yielding a 5'-phosphate and a 3'-hydroxyl group; requires a central core of homology in the junction. The consensus cleavage sequence is 5'-(A/T)TT(C/G)-3'. Cleavage occurs on the 3'-side of the TT dinucleotide at the point of strand exchange. HJ branch migration catalyzed by RuvA-RuvB allows RuvC to scan DNA until it finds its consensus sequence, where it cleaves and resolves the cruciform DNA. This is Crossover junction endodeoxyribonuclease RuvC from Corynebacterium efficiens (strain DSM 44549 / YS-314 / AJ 12310 / JCM 11189 / NBRC 100395).